Consider the following 430-residue polypeptide: Protein arginine methyltransferase NDUFAF7, mitochondrial (430 aa).

A mitochondrion-targeting transit peptide spans 1-31; the sequence is MSGLARLRKTAFLMVSASANCRIQRYQSSRT.

This sequence belongs to the NDUFAF7 family.

It is found in the mitochondrion. The enzyme catalyses L-arginyl-[protein] + 2 S-adenosyl-L-methionine = N(omega),N(omega)'-dimethyl-L-arginyl-[protein] + 2 S-adenosyl-L-homocysteine + 2 H(+). Arginine methyltransferase involved in the assembly or stability of mitochondrial NADH:ubiquinone oxidoreductase complex (complex I). Acts by mediating symmetric dimethylation of 'Arg-118' of ndufs2 after it assembles into the complex I, stabilizing the early intermediate complex. The protein is Protein arginine methyltransferase NDUFAF7, mitochondrial of Xenopus tropicalis (Western clawed frog).